Here is a 63-residue protein sequence, read N- to C-terminus: Prokaryotic ubiquitin-like protein Pup (63 aa).

The disordered stretch occupies residues 1–28 (MPQEFEQIRSADQPLDSEESAPVAGART). The ARC ATPase binding stretch occupies residues 19 to 57 (ESAPVAGARTDDTVDALDAVLDDIESVLETNAEEYVGSF). Glu-63 participates in a covalent cross-link: Isoglutamyl lysine isopeptide (Glu-Lys) (interchain with K-? in acceptor proteins).

The protein belongs to the prokaryotic ubiquitin-like protein family. Strongly interacts with the proteasome-associated ATPase ARC through a hydrophobic interface; the interacting region of Pup lies in its C-terminal half. There is one Pup binding site per ARC hexamer ring.

Its pathway is protein degradation; proteasomal Pup-dependent pathway. Protein modifier that is covalently attached to lysine residues of substrate proteins, thereby targeting them for proteasomal degradation. The tagging system is termed pupylation. The chain is Prokaryotic ubiquitin-like protein Pup from Bifidobacterium dentium (strain ATCC 27534 / DSM 20436 / JCM 1195 / Bd1).